The primary structure comprises 297 residues: Bifunctional protein FolD (297 aa).

NADP(+) is bound by residues 167–169 (GRS) and isoleucine 233.

It belongs to the tetrahydrofolate dehydrogenase/cyclohydrolase family. Homodimer.

It catalyses the reaction (6R)-5,10-methylene-5,6,7,8-tetrahydrofolate + NADP(+) = (6R)-5,10-methenyltetrahydrofolate + NADPH. It carries out the reaction (6R)-5,10-methenyltetrahydrofolate + H2O = (6R)-10-formyltetrahydrofolate + H(+). It participates in one-carbon metabolism; tetrahydrofolate interconversion. Catalyzes the oxidation of 5,10-methylenetetrahydrofolate to 5,10-methenyltetrahydrofolate and then the hydrolysis of 5,10-methenyltetrahydrofolate to 10-formyltetrahydrofolate. This is Bifunctional protein FolD from Zymomonas mobilis subsp. mobilis (strain ATCC 31821 / ZM4 / CP4).